The following is a 223-amino-acid chain: Putative PAN domain-containing protein R486 (223 aa).

Positions 1-23 are cleaved as a signal peptide; sequence MSQTAIIIWIVVIIILLVLGGLG. The tract at residues 39–73 is disordered; it reads PTPINPPSSITPIQPINPPSSITPIQPSGPPSGGN. The segment covering 45 to 64 has biased composition (low complexity); it reads PSSITPIQPINPPSSITPIQ. PAN domains follow at residues 80–155 and 159–223; these read CPAY…EDGC and ARYN…KMPH. 2 disulfides stabilise this stretch: C80-C155 and C109-C131. N162, N189, and N213 each carry an N-linked (GlcNAc...) asparagine; by host glycan. C182 and C204 are oxidised to a cystine.

It is found in the secreted. The protein localises to the virion. The protein is Putative PAN domain-containing protein R486 of Acanthamoeba polyphaga mimivirus (APMV).